The primary structure comprises 362 residues: Major capsid protein VP1 (362 aa).

Residues methionine 1 to proline 21 form a disordered region. The Bipartite nuclear localization signal signature appears at lysine 5–lysine 19. Residues isoleucine 302–glutamine 362 form a C-terminal arm region. Threonine 338 bears the Phosphothreonine; by host mark.

This sequence belongs to the polyomaviruses coat protein VP1 family. As to quaternary structure, homomultimer; disulfide-linked. The virus capsid is composed of 72 icosahedral units, each one composed of five disulfide-linked copies of VP1. Interacts with agnoprotein. Interacts with minor capsid proteins VP2 and VP3. Interacts with host HSPA8; this interaction probably participates in virus assembly. Interacts with host SP1; this interaction enhances the efficiency of viral packaging.

The protein localises to the virion. Its subcellular location is the host nucleus. It localises to the host endoplasmic reticulum. Functionally, forms an icosahedral capsid with a T=7 symmetry and a 40 nm diameter. The capsid is composed of 72 pentamers linked to each other by disulfide bonds and associated with VP2 or VP3 proteins. Binds to N-glycolylneuraminic analog of the ganglioside GM1 on the cell surface to provide virion attachment to target cell. Once attached, the virion is internalized by caveolin-mediated endocytosis and traffics to the endoplasmic reticulum. Inside the endoplasmic reticulum, the protein folding machinery isomerizes VP1 interpentamer disulfide bonds, thereby triggering initial uncoating. Next, the virion uses the endoplasmic reticulum-associated degradation machinery to probably translocate in the cytosol before reaching the nucleus. Nuclear entry of the viral DNA involves the selective exposure and importin recognition of VP2/Vp3 nuclear localization signal. The assembly takes place in the cell nucleus. Encapsulates the genomic DNA and participates in rearranging nucleosomes around the viral DNA. The viral progenies exit the cells by lytic release. The chain is Major capsid protein VP1 from Macaca (macaques).